The chain runs to 150 residues: MNIEVEMKVLDERMADFIPAYATEGSAGLDLRACLDEEVVLQPGETFLVPTGLAIYLANPAYAAVLLPRSGLGHKHGIVLGNLVGLIDSDYQGELKVSLWNRGSEPFAVKPFERIAQMVIVPVVQAGFKRVEEFVGSSRGEGGFGSTGSH.

Residues Arg69 to Gly71, Asn82, Leu86 to Asp88, and Lys96 contribute to the substrate site.

Belongs to the dUTPase family. Mg(2+) is required as a cofactor.

It carries out the reaction dUTP + H2O = dUMP + diphosphate + H(+). It functions in the pathway pyrimidine metabolism; dUMP biosynthesis; dUMP from dCTP (dUTP route): step 2/2. In terms of biological role, this enzyme is involved in nucleotide metabolism: it produces dUMP, the immediate precursor of thymidine nucleotides and it decreases the intracellular concentration of dUTP so that uracil cannot be incorporated into DNA. In Neisseria gonorrhoeae (strain ATCC 700825 / FA 1090), this protein is Deoxyuridine 5'-triphosphate nucleotidohydrolase.